A 300-amino-acid chain; its full sequence is Protein TRACHEARY ELEMENT DIFFERENTIATION-RELATED 7A (300 aa).

The interval 1–181 is disordered; that stretch reads MASPLSQSVF…HIIPPPPPSP (181 aa). At 1-187 the chain is on the extracellular side; sequence MASPLSQSVF…PPSPSNHSTT (187 aa). Residues 12–181 are compositionally biased toward pro residues; it reads HFPPPSPAAT…HIIPPPPPSP (170 aa). A glycan (N-linked (GlcNAc...) asparagine) is linked at asparagine 183. The chain crosses the membrane as a helical span at residues 188–208; sequence IVVIFVSCGGVFFLAFAMAAL. Over 209–300 the chain is Cytoplasmic; the sequence is WCFLKKKKKK…SSFGHHYLHG (92 aa).

In terms of tissue distribution, accumulates in cells differentiating into tracheary element (TE) which undergo secondary cell wall (SCW) formation.

The protein localises to the cell membrane. It localises to the secreted. The protein resides in the cell wall. Its function is as follows. Involved in the secondary cell wall (SCW) formation of vessel elements (e.g. protoxylem and metaxylem), thus promoting tracheary element (TE) differentiation. In Zinnia elegans (Garden zinnia), this protein is Protein TRACHEARY ELEMENT DIFFERENTIATION-RELATED 7A.